The chain runs to 380 residues: Crotonobetainyl-CoA reductase (380 aa).

Belongs to the acyl-CoA dehydrogenase family. Homotetramer. FAD is required as a cofactor.

It localises to the cytoplasm. The enzyme catalyses 4-(trimethylamino)butanoyl-CoA + oxidized [electron-transfer flavoprotein] + H(+) = crotonobetainyl-CoA + reduced [electron-transfer flavoprotein]. It participates in amine and polyamine metabolism; carnitine metabolism. In terms of biological role, catalyzes the reduction of crotonobetainyl-CoA to gamma-butyrobetainyl-CoA. The sequence is that of Crotonobetainyl-CoA reductase from Salmonella agona (strain SL483).